The primary structure comprises 226 residues: Histidine biosynthesis bifunctional protein HisIE (226 aa).

Residues 1-131 (MMPMNQEFIQ…STFNRPLSNT (131 aa)) form a phosphoribosyl-AMP cyclohydrolase region. The segment at 132–226 (CSELFEVIKD…KRRQSKSNPK (95 aa)) is phosphoribosyl-ATP pyrophosphohydrolase.

This sequence in the N-terminal section; belongs to the PRA-CH family. The protein in the C-terminal section; belongs to the PRA-PH family.

Its subcellular location is the cytoplasm. It carries out the reaction 1-(5-phospho-beta-D-ribosyl)-ATP + H2O = 1-(5-phospho-beta-D-ribosyl)-5'-AMP + diphosphate + H(+). The catalysed reaction is 1-(5-phospho-beta-D-ribosyl)-5'-AMP + H2O = 1-(5-phospho-beta-D-ribosyl)-5-[(5-phospho-beta-D-ribosylamino)methylideneamino]imidazole-4-carboxamide. It functions in the pathway amino-acid biosynthesis; L-histidine biosynthesis; L-histidine from 5-phospho-alpha-D-ribose 1-diphosphate: step 2/9. The protein operates within amino-acid biosynthesis; L-histidine biosynthesis; L-histidine from 5-phospho-alpha-D-ribose 1-diphosphate: step 3/9. The sequence is that of Histidine biosynthesis bifunctional protein HisIE from Prochlorococcus marinus (strain SARG / CCMP1375 / SS120).